The following is a 345-amino-acid chain: Hemin transport protein HmuS (345 aa).

This sequence to Y.enterocolitica HemS.

Part of the binding-protein-dependent transport system for hemin. This chain is Hemin transport protein HmuS (hmuS), found in Yersinia pestis.